The chain runs to 144 residues: MRSRSFLVLVAVFLICETLVAQRLDRIRGPKGQGQDPVEGQDQDEGQGPVKVEILDIGQDLVKGQDPVEGQDPVKAQLPDKVQDPVKAQPPIQGGFLFPKPGVCPKIIFCPLVNPPIKCWRDSHCPGVKKCCPSLCGKGCVTPR.

Positions 1–21 are cleaved as a signal peptide; the sequence is MRSRSFLVLVAVFLICETLVA. The disordered stretch occupies residues 28-49; sequence RGPKGQGQDPVEGQDQDEGQGP. A region of interest (8 X 6 AA approximate tandem repeats) is located at residue Gly-34. 8 repeat units span residues 34-39, 40-45, 46-51, 58-63, 64-69, 70-75, 76-81, and 82-87. The interval 64 to 85 is disordered; it reads GQDPVEGQDPVKAQLPDKVQDP. One can recognise a WAP domain in the interval 97-144; the sequence is LFPKPGVCPKIIFCPLVNPPIKCWRDSHCPGVKKCCPSLCGKGCVTPR. Disulfide bonds link Cys-104–Cys-132, Cys-110–Cys-136, Cys-119–Cys-131, and Cys-125–Cys-140.

In terms of tissue distribution, large intestine (relatively low levels).

In Sus scrofa (Pig), this protein is Protein WAP-3.